The primary structure comprises 289 residues: Agamous-like MADS-box protein AGL93 (289 aa).

The region spanning Q18–D78 is the MADS-box domain. The tract at residues E151–T197 is disordered. Residues G187–T197 are compositionally biased toward polar residues.

As to expression, expressed in pollen.

It localises to the nucleus. Its function is as follows. Probable transcription factor. The chain is Agamous-like MADS-box protein AGL93 from Arabidopsis thaliana (Mouse-ear cress).